A 350-amino-acid polypeptide reads, in one-letter code: Flap endonuclease 1 (350 aa).

Residues 1-101 (MGVNIREVIP…LEIERRKRVK (101 aa)) form an N-domain region. Asp30, Asp83, Glu155, Glu157, Asp176, Asp178, and Asp239 together coordinate Mg(2+). Residues 119-261 (AARRYAQMAA…TALKMVKAHR (143 aa)) form an I-domain region. Residues 340–348 (QQMGLDAWL) form an interaction with PCNA region.

It belongs to the XPG/RAD2 endonuclease family. FEN1 subfamily. In terms of assembly, interacts with PCNA. PCNA stimulates the nuclease activity without altering cleavage specificity. Requires Mg(2+) as cofactor.

In terms of biological role, structure-specific nuclease with 5'-flap endonuclease and 5'-3' exonuclease activities involved in DNA replication and repair. During DNA replication, cleaves the 5'-overhanging flap structure that is generated by displacement synthesis when DNA polymerase encounters the 5'-end of a downstream Okazaki fragment. Binds the unpaired 3'-DNA end and kinks the DNA to facilitate 5' cleavage specificity. Cleaves one nucleotide into the double-stranded DNA from the junction in flap DNA, leaving a nick for ligation. Also involved in the base excision repair (BER) pathway. Acts as a genome stabilization factor that prevents flaps from equilibrating into structures that lead to duplications and deletions. Also possesses 5'-3' exonuclease activity on nicked or gapped double-stranded DNA. The sequence is that of Flap endonuclease 1 from Hyperthermus butylicus (strain DSM 5456 / JCM 9403 / PLM1-5).